Consider the following 108-residue polypeptide: Peptidyl-prolyl cis-trans isomerase FKBP1A (108 aa).

The region spanning 20–108 is the PPIase FKBP-type domain; it reads GQTCVVHYTG…VFDVELLKLE (89 aa). Residue K53 is modified to N6-acetyllysine; alternate. The residue at position 53 (K53) is an N6-succinyllysine; alternate.

Belongs to the FKBP-type PPIase family. FKBP1 subfamily. In terms of assembly, interacts with TGFBR1; prevents TGFBR1 phosphorylation by TGFBR2 and stabilizes it in the inactive conformation. Interacts with ACVR1B and SMAD7. Identified in a complex composed of RYR1, PDE4D, PKA, FKBP1A and protein phosphatase 1 (PP1). Interacts directly with RYR2 and RYR3. Interacts with GLMN; rapamycin and FK506 abolish the interaction with GLMN in a dose dependent manner. Interacts directly with RYR1.

The protein resides in the cytoplasm. It is found in the cytosol. It localises to the sarcoplasmic reticulum membrane. The enzyme catalyses [protein]-peptidylproline (omega=180) = [protein]-peptidylproline (omega=0). With respect to regulation, inhibited by both FK506 and rapamycin. In terms of biological role, keeps in an inactive conformation TGFBR1, the TGF-beta type I serine/threonine kinase receptor, preventing TGF-beta receptor activation in absence of ligand. Recruits SMAD7 to ACVR1B which prevents the association of SMAD2 and SMAD3 with the activin receptor complex, thereby blocking the activin signal. May modulate the RYR1 calcium channel activity. PPIases accelerate the folding of proteins. It catalyzes the cis-trans isomerization of proline imidic peptide bonds in oligopeptides. In Homo sapiens (Human), this protein is Peptidyl-prolyl cis-trans isomerase FKBP1A (FKBP1A).